The primary structure comprises 284 residues: Phosphatidylglycerol--prolipoprotein diacylglyceryl transferase (284 aa).

7 helical membrane passes run 21–41 (IEVH…FYMA), 62–82 (YFLW…ILIY), 106–126 (FVGI…IASY), 136–156 (LLIY…FGRI), 190–210 (PSQL…VMWA), 218–238 (GLLI…AEFY), and 252–272 (LSMG…ILLY). Position 155 (Arg155) interacts with a 1,2-diacyl-sn-glycero-3-phospho-(1'-sn-glycerol).

It belongs to the Lgt family.

It is found in the cell inner membrane. It catalyses the reaction L-cysteinyl-[prolipoprotein] + a 1,2-diacyl-sn-glycero-3-phospho-(1'-sn-glycerol) = an S-1,2-diacyl-sn-glyceryl-L-cysteinyl-[prolipoprotein] + sn-glycerol 1-phosphate + H(+). It functions in the pathway protein modification; lipoprotein biosynthesis (diacylglyceryl transfer). In terms of biological role, catalyzes the transfer of the diacylglyceryl group from phosphatidylglycerol to the sulfhydryl group of the N-terminal cysteine of a prolipoprotein, the first step in the formation of mature lipoproteins. The polypeptide is Phosphatidylglycerol--prolipoprotein diacylglyceryl transferase (Helicobacter pylori (strain P12)).